A 372-amino-acid polypeptide reads, in one-letter code: Phospho-N-acetylmuramoyl-pentapeptide-transferase (372 aa).

10 helical membrane passes run Ser21–Gly41, Thr71–Ala91, Val98–Leu118, Tyr134–Leu154, Met176–Ile196, Gly211–Ser231, Val251–His271, Val275–Met295, Ile300–Val320, and Gln349–Leu369.

This sequence belongs to the glycosyltransferase 4 family. MraY subfamily. Mg(2+) serves as cofactor.

The protein resides in the cell inner membrane. It carries out the reaction UDP-N-acetyl-alpha-D-muramoyl-L-alanyl-gamma-D-glutamyl-meso-2,6-diaminopimeloyl-D-alanyl-D-alanine + di-trans,octa-cis-undecaprenyl phosphate = di-trans,octa-cis-undecaprenyl diphospho-N-acetyl-alpha-D-muramoyl-L-alanyl-D-glutamyl-meso-2,6-diaminopimeloyl-D-alanyl-D-alanine + UMP. Its pathway is cell wall biogenesis; peptidoglycan biosynthesis. In terms of biological role, catalyzes the initial step of the lipid cycle reactions in the biosynthesis of the cell wall peptidoglycan: transfers peptidoglycan precursor phospho-MurNAc-pentapeptide from UDP-MurNAc-pentapeptide onto the lipid carrier undecaprenyl phosphate, yielding undecaprenyl-pyrophosphoryl-MurNAc-pentapeptide, known as lipid I. This is Phospho-N-acetylmuramoyl-pentapeptide-transferase from Psychrobacter arcticus (strain DSM 17307 / VKM B-2377 / 273-4).